The primary structure comprises 282 residues: MIYETAPAKINFTLDTLFKRDDGYHEIEMVMTTVDLNDRLSFEKRTDNKIVVDIEHNYVPNDNKNLAYKAADLMFERFNINEGVTISIDKDIPVSAGLAGGSADAAATMRGLNRLFGLGQSLDALAALGIQIGTDIPFCIYNQTAVCTGRGEQVTFLKRPPSAWVVLAKPNIGISSPDVFKALDLTEEHIVHNEKCKQALENNDYHLLCNSLSNRLEPVSMAMHPDIKKIKDNMLQCGADGALMSGSGPTVYGLAQKERQAKNIYNAVNGCCNEVYLVRLLG.

The active site involves Lys9. Residue 93–103 (PVSAGLAGGSA) coordinates ATP. Asp135 is an active-site residue.

This sequence belongs to the GHMP kinase family. IspE subfamily.

The enzyme catalyses 4-CDP-2-C-methyl-D-erythritol + ATP = 4-CDP-2-C-methyl-D-erythritol 2-phosphate + ADP + H(+). Its function is as follows. Catalyzes the phosphorylation of the position 2 hydroxy group of 4-diphosphocytidyl-2C-methyl-D-erythritol. This Staphylococcus epidermidis (strain ATCC 35984 / DSM 28319 / BCRC 17069 / CCUG 31568 / BM 3577 / RP62A) protein is Putative 4-diphosphocytidyl-2-C-methyl-D-erythritol kinase (ispE).